The primary structure comprises 29 residues: ShK homolog Ask132958 (29 aa).

The 29-residue stretch at 1-29 (CENTISGCSRADCLLTHRKQGCQKTCGLC) folds into the ShKT domain. Cystine bridges form between Cys1/Cys29, Cys8/Cys22, and Cys13/Cys26.

This sequence belongs to the sea anemone type 1 potassium channel toxin family. Type 1a subfamily.

The protein resides in the secreted. The protein localises to the nematocyst. This peptide is similar to the potassium channel toxin ShK, but does not show activity on potassium channels. It appears that Lys-19, which is expected to occupy the pore of the channel, is not sufficiently accessible for binding, and therefore that this peptide must have a distinct functional role that does not involve potassium channels. It is noteworthy that this peptide is much more stable in the presence of trypsin, chymotrypsin and pepsin than the toxin ShK. This Anemonia sulcata (Mediterranean snakelocks sea anemone) protein is ShK homolog Ask132958.